The primary structure comprises 229 residues: Flagellar L-ring protein (229 aa).

Residues 1–23 (MSPLTRIALALAASAALVLALTA) form the signal peptide. Cysteine 24 carries the N-palmitoyl cysteine lipid modification. The S-diacylglycerol cysteine moiety is linked to residue cysteine 24.

It belongs to the FlgH family. As to quaternary structure, the basal body constitutes a major portion of the flagellar organelle and consists of four rings (L,P,S, and M) mounted on a central rod.

It localises to the cell outer membrane. The protein resides in the bacterial flagellum basal body. Its function is as follows. Assembles around the rod to form the L-ring and probably protects the motor/basal body from shearing forces during rotation. The sequence is that of Flagellar L-ring protein from Anaeromyxobacter dehalogenans (strain 2CP-C).